A 607-amino-acid chain; its full sequence is Arginine--tRNA ligase (607 aa).

A 'HIGH' region motif is present at residues 147–157 (PNIAKEMHVGH).

The protein belongs to the class-I aminoacyl-tRNA synthetase family. In terms of assembly, monomer.

Its subcellular location is the cytoplasm. The enzyme catalyses tRNA(Arg) + L-arginine + ATP = L-arginyl-tRNA(Arg) + AMP + diphosphate. The polypeptide is Arginine--tRNA ligase (Prochlorococcus marinus (strain NATL2A)).